Here is a 248-residue protein sequence, read N- to C-terminus: Ribonuclease PH (248 aa).

Residues R86 and 124 to 126 (GTR) contribute to the phosphate site.

The protein belongs to the RNase PH family. As to quaternary structure, homohexameric ring arranged as a trimer of dimers.

The enzyme catalyses tRNA(n+1) + phosphate = tRNA(n) + a ribonucleoside 5'-diphosphate. Functionally, phosphorolytic 3'-5' exoribonuclease that plays an important role in tRNA 3'-end maturation. Removes nucleotide residues following the 3'-CCA terminus of tRNAs; can also add nucleotides to the ends of RNA molecules by using nucleoside diphosphates as substrates, but this may not be physiologically important. Probably plays a role in initiation of 16S rRNA degradation (leading to ribosome degradation) during starvation. The polypeptide is Ribonuclease PH (Clostridium kluyveri (strain NBRC 12016)).